The primary structure comprises 941 residues: MWTEEAAATAEARESGIRNKSSSSSQIPVVGVVTEDNEAQGVFKPMDLNRVIKLLEETDKDGLEEKQLKFVKKLVQCFQNGLPLRDLAQIFKILNLCAGKIKNQPRFVESAYDIIKLCSLPFLKKKVSDEITYAEDTANSIALLGDLMKIPSSELRIQICKCIVDFYHAEPPKKHIPGYQQASSSYKIQMAEVGGLAKTMVQSITLLEHQLVEKLWVLKVLQHLSTSEVNCTIMMKAQAASGICTHLNDPDPSGQLLFRSSEILWNLLEKSSKEEVIQQLSNLECLLALKEVFTNLFMRGFSHYDRQLRNDILVITTIIAQNPEAPMIECGFTKDLILFATFNEVKSQNLLVKGLKLSNSYEDFELKKLLFNVIVILCKDLPTVQLLIDGKVILALFTYVKKPEKQKIMGWSAAQHEELQLHAIATLSSVAPLLIEEYMSCQGNARVLAFLEWCESEDPFFSHGNSFHGTGGRGNKFAQMRYSLRLLRAMVYLEDETVNTDLCEKGTIQQMIGIFKNIISKPNEKEEAIVLEIQSDILLILSGLCENHIQRKEIFGTEGVDIVLHVMKTDPRKLQSGLGYNLLLFSTLDSIWCCILGCYPSEDYFLEREGIFLLLDVLALNQKKFCNLILGIMVEFCDNPKTAAHVNAWQGKKDQTAASLLIKLWRKEEKELGVKRDKNGKIIDTKKPLFTSFQEEHKIIPLPANCPSIAVMDVSENIRAKIYAILGKLDFENLPGLSAEDFVTLCVIHRYLDFKIGEIWNEIYEEIKLEKLRPVTIDKKALEAITTASENVGKMVASLQSEIIESQARQDVQNEQKVYAKIQATHKQRELANKSWENFLARTSNAKTLKKAKRLQEKAIEASRYHKRPQNAVFHGTDIKGLNTTVPSGGVVTVESTPARLVGGPLADTDIALKKLPIRGGALQRVKAVEIVDAPKKSIPT.

The span at 1–10 shows a compositional bias: low complexity; the sequence is MWTEEAAATA. The interval 1 to 23 is disordered; sequence MWTEEAAATAEARESGIRNKSSS.

The protein localises to the cell projection. It localises to the cilium. It is found in the flagellum. Functionally, cilium- and flagellum-associated protein. In the olfactory epithelium, regulates the speed of activation and termination of the odor response and thus contributes to the robustness of olfactory transduction pathways. Required for sperm flagellum assembly and stability. The chain is Cilia- and flagella-associated protein 69 from Papio anubis (Olive baboon).